The chain runs to 235 residues: MKKLSKRMAALSTKIEDRIYAPLEALSIIKENANAKFDETIEAHIRLGIDPKYTDQQLRTTVVLPHGTGQSIKIAVITSGENVSKAKAAGADLFGEEDLVESINKGNMEFDLLIATPDMMPKVAKLGRVLGPRGLMPNPKAGTVTNDIANAIKEFKAGKLEFRADKAGIVHVRFGKASFTKEALFDNLKTLQESIDKNKPSGAKGKYWKTFYVTSTMGPSVQLDINAVQDYQPEG.

It belongs to the universal ribosomal protein uL1 family. In terms of assembly, part of the 50S ribosomal subunit.

Its function is as follows. Binds directly to 23S rRNA. The L1 stalk is quite mobile in the ribosome, and is involved in E site tRNA release. In terms of biological role, protein L1 is also a translational repressor protein, it controls the translation of the L11 operon by binding to its mRNA. The protein is Large ribosomal subunit protein uL1 of Prochlorococcus marinus (strain AS9601).